Reading from the N-terminus, the 241-residue chain is Uridylate kinase (241 aa).

Residues 10-13 (KLSG), glycine 53, and arginine 57 each bind ATP. Residues aspartate 72 and 133 to 140 (AGSPYFST) each bind UMP. ATP-binding residues include asparagine 161, tyrosine 167, and aspartate 170.

This sequence belongs to the UMP kinase family. Homohexamer.

The protein localises to the cytoplasm. It carries out the reaction UMP + ATP = UDP + ADP. The protein operates within pyrimidine metabolism; CTP biosynthesis via de novo pathway; UDP from UMP (UMPK route): step 1/1. Inhibited by UTP. Functionally, catalyzes the reversible phosphorylation of UMP to UDP. The chain is Uridylate kinase from Onion yellows phytoplasma (strain OY-M).